The sequence spans 110 residues: Large ribosomal subunit protein uL22 (110 aa).

Basic residues predominate over residues 85–95 (RGTASKIRKPT). Positions 85–110 (RGTASKIRKPTSHVMVEVSKAQKKEA) are disordered.

The protein belongs to the universal ribosomal protein uL22 family. Part of the 50S ribosomal subunit.

In terms of biological role, this protein binds specifically to 23S rRNA; its binding is stimulated by other ribosomal proteins, e.g. L4, L17, and L20. It is important during the early stages of 50S assembly. It makes multiple contacts with different domains of the 23S rRNA in the assembled 50S subunit and ribosome. Its function is as follows. The globular domain of the protein is located near the polypeptide exit tunnel on the outside of the subunit, while an extended beta-hairpin is found that lines the wall of the exit tunnel in the center of the 70S ribosome. In Campylobacter curvus (strain 525.92), this protein is Large ribosomal subunit protein uL22.